We begin with the raw amino-acid sequence, 910 residues long: DnaJ-like protein MG200 homolog (910 aa).

The J domain occupies 4-73 (AKRDYYEVLG…RANYDKYGHD (70 aa)). 3 disordered regions span residues 102-160 (DNLS…DDIP), 260-408 (TEPS…LEQD), and 451-486 (VLSD…STAP). Basic residues predominate over residues 111-121 (KKEKTKTKKKG). Residues 273-283 (DSDAVTAATTV) are compositionally biased toward low complexity. A compositionally biased stretch (acidic residues) spans 357–379 (SDEADATNEPTEQDTISEPEQET). The span at 451-462 (VLSDQNPNPQTP) shows a compositional bias: polar residues.

This Mycoplasma pneumoniae (strain ATCC 29342 / M129 / Subtype 1) (Mycoplasmoides pneumoniae) protein is DnaJ-like protein MG200 homolog.